The chain runs to 77 residues: DNA-directed RNA polymerase subunit epsilon (77 aa).

Belongs to the RNA polymerase subunit epsilon family. In terms of assembly, RNAP is composed of a core of 2 alpha, a beta and a beta' subunit. The core is associated with a delta subunit, and at least one of epsilon or omega. When a sigma factor is associated with the core the holoenzyme is formed, which can initiate transcription.

The enzyme catalyses RNA(n) + a ribonucleoside 5'-triphosphate = RNA(n+1) + diphosphate. Functionally, a non-essential component of RNA polymerase (RNAP). The chain is DNA-directed RNA polymerase subunit epsilon from Lactobacillus delbrueckii subsp. bulgaricus (strain ATCC 11842 / DSM 20081 / BCRC 10696 / JCM 1002 / NBRC 13953 / NCIMB 11778 / NCTC 12712 / WDCM 00102 / Lb 14).